Here is a 327-residue protein sequence, read N- to C-terminus: F-box/LRR-repeat protein At3g58900 (327 aa).

The F-box domain maps to 1–47 (MDLFSSLPNELLYHILSFLSTKEAALTSVLSKRWRNLFAFVPYLEFD). LRR repeat units follow at residues 116-144 (DLFI…RVGS), 161-192 (KTLV…DMTN), 199-230 (NVTV…SFDA), 235-261 (YFYY…QINL), and 277-308 (EMLV…YLSP).

This chain is F-box/LRR-repeat protein At3g58900, found in Arabidopsis thaliana (Mouse-ear cress).